The chain runs to 137 residues: Large ribosomal subunit protein uL16 (137 aa).

It belongs to the universal ribosomal protein uL16 family. As to quaternary structure, part of the 50S ribosomal subunit.

Functionally, binds 23S rRNA and is also seen to make contacts with the A and possibly P site tRNAs. The sequence is that of Large ribosomal subunit protein uL16 from Azorhizobium caulinodans (strain ATCC 43989 / DSM 5975 / JCM 20966 / LMG 6465 / NBRC 14845 / NCIMB 13405 / ORS 571).